A 254-amino-acid polypeptide reads, in one-letter code: Adenosylcobinamide-GDP ribazoletransferase (254 aa).

7 consecutive transmembrane segments (helical) span residues 27 to 47 (SSLYWFPVVGLVIGGIVVLLA), 50 to 70 (GMGVGWPELAAVLALLGGLIL), 104 to 124 (VGSFGSLALIGVMLFKWICLL), 131 to 151 (AYGMIAAGAVLSRTAQVLLAA), 170 to 190 (AGWPHLLVASISGVVLLFVLL), 194 to 214 (LAPSLILLFGSVVALFFVGWL), and 233 to 253 (LVEAAVWLLAALWLKGLFWAI).

This sequence belongs to the CobS family. Mg(2+) serves as cofactor.

The protein resides in the cell inner membrane. It carries out the reaction alpha-ribazole + adenosylcob(III)inamide-GDP = adenosylcob(III)alamin + GMP + H(+). The enzyme catalyses alpha-ribazole 5'-phosphate + adenosylcob(III)inamide-GDP = adenosylcob(III)alamin 5'-phosphate + GMP + H(+). It functions in the pathway cofactor biosynthesis; adenosylcobalamin biosynthesis; adenosylcobalamin from cob(II)yrinate a,c-diamide: step 7/7. Joins adenosylcobinamide-GDP and alpha-ribazole to generate adenosylcobalamin (Ado-cobalamin). Also synthesizes adenosylcobalamin 5'-phosphate from adenosylcobinamide-GDP and alpha-ribazole 5'-phosphate. In Chlorobaculum tepidum (strain ATCC 49652 / DSM 12025 / NBRC 103806 / TLS) (Chlorobium tepidum), this protein is Adenosylcobinamide-GDP ribazoletransferase.